The sequence spans 643 residues: DNA-directed RNA polymerase subunit beta' (643 aa).

Positions 83, 85, 98, and 101 each coordinate Zn(2+). Residues Asp480, Asp482, and Asp484 each coordinate Mg(2+).

It belongs to the RNA polymerase beta' chain family. RpoC1 subfamily. In plastids the minimal PEP RNA polymerase catalytic core is composed of four subunits: alpha, beta, beta', and beta''. When a (nuclear-encoded) sigma factor is associated with the core the holoenzyme is formed, which can initiate transcription. It depends on Mg(2+) as a cofactor. Zn(2+) is required as a cofactor.

It is found in the plastid. The protein resides in the organellar chromatophore. The catalysed reaction is RNA(n) + a ribonucleoside 5'-triphosphate = RNA(n+1) + diphosphate. DNA-dependent RNA polymerase catalyzes the transcription of DNA into RNA using the four ribonucleoside triphosphates as substrates. The chain is DNA-directed RNA polymerase subunit beta' from Paulinella chromatophora.